A 246-amino-acid chain; its full sequence is Bis(5'-nucleosyl)-tetraphosphatase PrpE [asymmetrical] (246 aa).

Belongs to the PrpE family. Requires Ni(2+) as cofactor.

The enzyme catalyses P(1),P(4)-bis(5'-guanosyl) tetraphosphate + H2O = GMP + GTP + 2 H(+). Asymmetrically hydrolyzes Ap4p to yield AMP and ATP. The polypeptide is Bis(5'-nucleosyl)-tetraphosphatase PrpE [asymmetrical] (Bacillus mycoides (strain KBAB4) (Bacillus weihenstephanensis)).